The following is a 236-amino-acid chain: Uridylate kinase (236 aa).

Lysine 8–glycine 11 contacts ATP. The involved in allosteric activation by GTP stretch occupies residues glycine 16–glycine 21. Residues glycine 51 and arginine 55 each contribute to the ATP site. UMP is bound by residues aspartate 70 and threonine 131–threonine 138. 3 residues coordinate ATP: asparagine 159, tyrosine 165, and aspartate 168.

The protein belongs to the UMP kinase family. Homohexamer.

Its subcellular location is the cytoplasm. It carries out the reaction UMP + ATP = UDP + ADP. Its pathway is pyrimidine metabolism; CTP biosynthesis via de novo pathway; UDP from UMP (UMPK route): step 1/1. With respect to regulation, allosterically activated by GTP. Inhibited by UTP. Its function is as follows. Catalyzes the reversible phosphorylation of UMP to UDP. This chain is Uridylate kinase, found in Shouchella clausii (strain KSM-K16) (Alkalihalobacillus clausii).